We begin with the raw amino-acid sequence, 392 residues long: Rhizopuspepsin-5 (392 aa).

The N-terminal stretch at 1 to 21 (MKFSLISSCVALAVLVLSTEA) is a signal peptide. The propeptide at 22–69 (APNGKKVNIPLTKNKDYKPNAKNAIQKVLAKYHRHRSTSSSSNSTSTD) is activation peptide. The 305-residue stretch at 85–389 (YFGQVKVGTP…NPTVPQVQIA (305 aa)) folds into the Peptidase A1 domain. Residue Asp103 is part of the active site. Cys116 and Cys119 are joined by a disulfide. The active site involves Asp286. Cys320 and Cys353 are joined by a disulfide.

The protein belongs to the peptidase A1 family.

The enzyme catalyses Hydrolysis of proteins with broad specificity similar to that of pepsin A, preferring hydrophobic residues at P1 and P1'. Clots milk and activates trypsinogen. Does not cleave 4-Gln-|-His-5, but does cleave 10-His-|-Leu-11 and 12-Val-|-Glu-13 in B chain of insulin.. This Rhizopus niveus protein is Rhizopuspepsin-5.